We begin with the raw amino-acid sequence, 522 residues long: Transmembrane protein 213R (522 aa).

Helical transmembrane passes span 33–50 (NTITRLILIASLVLLLFG) and 55–72 (SLYILIIGLIIVIVIYSQ).

Belongs to the IIV-6 213R family.

The protein localises to the membrane. The sequence is that of Transmembrane protein 213R from Invertebrate iridescent virus 6 (IIV-6).